Consider the following 104-residue polypeptide: Large ribosomal subunit protein uL24 (104 aa).

Belongs to the universal ribosomal protein uL24 family. As to quaternary structure, part of the 50S ribosomal subunit.

In terms of biological role, one of two assembly initiator proteins, it binds directly to the 5'-end of the 23S rRNA, where it nucleates assembly of the 50S subunit. Functionally, one of the proteins that surrounds the polypeptide exit tunnel on the outside of the subunit. The sequence is that of Large ribosomal subunit protein uL24 from Shigella dysenteriae serotype 1 (strain Sd197).